The chain runs to 101 residues: MDKSKRPFLKSKRSFRRRLPPIQSGDRIDYRNMSLISRFISEQGKILSRRVNRLTLKQQRLITIAIKQARILSSLPFLNNEKQFERTESTARTTGLRTRNK.

This sequence belongs to the bacterial ribosomal protein bS18 family. As to quaternary structure, part of the 30S ribosomal subunit.

It is found in the plastid. It localises to the chloroplast. This chain is Small ribosomal subunit protein bS18c, found in Vitis vinifera (Grape).